Reading from the N-terminus, the 1507-residue chain is Lhr helicase/ probable uracil glycosylase (1507 aa).

A lhr-Core region spans residues 1 to 856 (MTTNGADPLG…ASLLFGYVGA (856 aa)). Residues Phe-24, Gln-31, Lys-54, and Thr-55 each contribute to the ATP site. Residues 35-226 (WSAISEGNNT…FLSGQAPTTI (192 aa)) form the Helicase ATP-binding domain. Arg-122, Arg-131, Thr-145, Ser-148, and Met-152 together coordinate ssDNA. Residues Asp-170 and Glu-171 each coordinate ATP. Positions 170–173 (DEVH) match the DEAH box motif. Residues Ser-253, Trp-255, and Arg-279 each contribute to the ssDNA site. Positions 257–451 (DVEERIVDLV…VLAQHTVAVA (195 aa)) constitute a Helicase C-terminal domain. Residues Ile-377, Arg-394, and His-397 each contribute to the ATP site. The ssDNA site is built by Lys-410, Gln-518, Arg-519, Ile-528, Trp-597, Asp-600, and Arg-777. The WH domain stretch occupies residues 436–529 (PANPLDVLAQ…LAVTSGGAIP (94 aa)). Residues 530 to 856 (DRGMFTVYLA…ASLLFGYVGA (327 aa)) form a domain 4 region. The CTD stretch occupies residues 857-1507 (FMYEGDSPLA…SRTPRGLRLR (651 aa)).

The protein belongs to the Lhr helicase family. In terms of assembly, monomer. Homooligomerizes, possibly a homotetramer. Ca(2+) serves as cofactor.

The enzyme catalyses Couples ATP hydrolysis with the unwinding of duplex DNA by translocating in the 3'-5' direction.. It catalyses the reaction ATP + H2O = ADP + phosphate + H(+). It carries out the reaction Hydrolyzes single-stranded DNA or mismatched double-stranded DNA and polynucleotides, releasing free uracil.. A 3'-5' helicase involved in repair of at least 3 types of DNA cross-links, mitomycin C (MMC), cisplatin, and psoralen-UVA. Translocates 3'-to-5' on single-stranded (ss)DNA, unwinding any encountered duplex nucleic acid. A 3'-ssDNA loading strand of at least 15 nucleotides is required for helicase activity. An RNA:DNA hybrid with a 3'-ssDNA loading strand is an 8-fold better helicase substrate than 3'-tailed double-stranded (ds)DNA; substrates where the helicase loads on a 3'-ssRNA tail (DNA:RNA and RNA:RNA) are not unwound. Only (d)ATP is hydrolyzed by the protein, which has no ATPase activity in the absence of ssDNA or ssRNA. Arg-279 and Trp-597 are needed to couple ATP hydrolysis to mechanical work; a salt bridge between Arg-280 and Glu-550 closes a clamp around the ssDNA that is not large enough for dsDNA, while Ile-528 wedges between bases of the loading strand. Functionally, excises uracil residues from ssDNA. Uracil residues in DNA can arise as a result of misincorporation of dUMP residues by DNA polymerase or due to deamination of cytosine. This is Lhr helicase/ probable uracil glycosylase from Mycolicibacterium smegmatis (strain ATCC 700084 / mc(2)155) (Mycobacterium smegmatis).